A 550-amino-acid polypeptide reads, in one-letter code: CTP synthase (550 aa).

The interval M1 to M271 is amidoligase domain. Residue S13 participates in CTP binding. S13 contributes to the UTP binding site. S14 to L19 provides a ligand contact to ATP. Y54 is a binding site for L-glutamine. D71 contributes to the ATP binding site. Mg(2+)-binding residues include D71 and E145. CTP is bound by residues D152 to E154, K192 to Q197, and K228. UTP-binding positions include K192–Q197 and K228. Residues T297 to L549 form the Glutamine amidotransferase type-1 domain. G361 lines the L-glutamine pocket. C388 acts as the Nucleophile; for glutamine hydrolysis in catalysis. L-glutamine is bound by residues F389 to Q392, E412, and R477. Catalysis depends on residues H522 and E524.

Belongs to the CTP synthase family. In terms of assembly, homotetramer.

It carries out the reaction UTP + L-glutamine + ATP + H2O = CTP + L-glutamate + ADP + phosphate + 2 H(+). The catalysed reaction is L-glutamine + H2O = L-glutamate + NH4(+). The enzyme catalyses UTP + NH4(+) + ATP = CTP + ADP + phosphate + 2 H(+). Its pathway is pyrimidine metabolism; CTP biosynthesis via de novo pathway; CTP from UDP: step 2/2. Allosterically activated by GTP, when glutamine is the substrate; GTP has no effect on the reaction when ammonia is the substrate. The allosteric effector GTP functions by stabilizing the protein conformation that binds the tetrahedral intermediate(s) formed during glutamine hydrolysis. Inhibited by the product CTP, via allosteric rather than competitive inhibition. Catalyzes the ATP-dependent amination of UTP to CTP with either L-glutamine or ammonia as the source of nitrogen. Regulates intracellular CTP levels through interactions with the four ribonucleotide triphosphates. The protein is CTP synthase of Caulobacter vibrioides (strain ATCC 19089 / CIP 103742 / CB 15) (Caulobacter crescentus).